Consider the following 638-residue polypeptide: Stress-activated protein kinase alpha (638 aa).

ANK repeat units lie at residues 43–72 (YGQSALTIALKNNNEEMVELLLSLCVTLKA), 80–109 (NGFSALHQAVSSDDRILMRVLQYENINVDV), 113–146 (DLNTPIHYFCQKFRSPNCQEPFQLFIQKGVNVNA), 150–181 (NGETPLHKAIFNNSVRLMMVGLLLKNGANVNL), 185–214 (FQESPLHYAVRLGREDLVSVLLKAGADVDC), and 219–248 (ERKTPYQLAVEEGNKDMTARIKKYKDLFDW). Residues 240 to 303 (KKYKDLFDWL…LKETSNLANE (64 aa)) enclose the SAM domain. Residues 351–620 (LEYTEKLGAG…RLVTIENEYR (270 aa)) form the Protein kinase domain. ATP-binding positions include 357–365 (LGAGSSGKV) and lysine 378. Residue aspartate 472 is the Proton acceptor of the active site.

Belongs to the protein kinase superfamily. TKL Ser/Thr protein kinase family. In terms of assembly, interacts with F-actin. In terms of processing, autophosphorylated.

The protein localises to the cytoplasm. The protein resides in the cytoskeleton. The catalysed reaction is L-seryl-[protein] + ATP = O-phospho-L-seryl-[protein] + ADP + H(+). It catalyses the reaction L-threonyl-[protein] + ATP = O-phospho-L-threonyl-[protein] + ADP + H(+). May be involved in cortical F-actin organization and resistance to osmotic stress. Activated upon cell detachment, in vitro. The sequence is that of Stress-activated protein kinase alpha (spkA-1) from Dictyostelium discoideum (Social amoeba).